Consider the following 346-residue polypeptide: Holliday junction branch migration complex subunit RuvB (346 aa).

The large ATPase domain (RuvB-L) stretch occupies residues 1-182 (MSERLVTSNE…FGVLCSMEYY (182 aa)). Residues L21, R22, G63, K66, T67, T68, 129-131 (EDY), R172, Y182, and R219 each bind ATP. Residue T67 coordinates Mg(2+). The tract at residues 183–253 (TDEQLKEIII…AAKKSLEILE (71 aa)) is small ATPAse domain (RuvB-S). The segment at 256-346 (GEGFDRIDNK…DSKQCTLFEK (91 aa)) is head domain (RuvB-H). The DNA site is built by R311 and R316.

Belongs to the RuvB family. Homohexamer. Forms an RuvA(8)-RuvB(12)-Holliday junction (HJ) complex. HJ DNA is sandwiched between 2 RuvA tetramers; dsDNA enters through RuvA and exits via RuvB. An RuvB hexamer assembles on each DNA strand where it exits the tetramer. Each RuvB hexamer is contacted by two RuvA subunits (via domain III) on 2 adjacent RuvB subunits; this complex drives branch migration. In the full resolvosome a probable DNA-RuvA(4)-RuvB(12)-RuvC(2) complex forms which resolves the HJ.

Its subcellular location is the cytoplasm. It catalyses the reaction ATP + H2O = ADP + phosphate + H(+). Functionally, the RuvA-RuvB-RuvC complex processes Holliday junction (HJ) DNA during genetic recombination and DNA repair, while the RuvA-RuvB complex plays an important role in the rescue of blocked DNA replication forks via replication fork reversal (RFR). RuvA specifically binds to HJ cruciform DNA, conferring on it an open structure. The RuvB hexamer acts as an ATP-dependent pump, pulling dsDNA into and through the RuvAB complex. RuvB forms 2 homohexamers on either side of HJ DNA bound by 1 or 2 RuvA tetramers; 4 subunits per hexamer contact DNA at a time. Coordinated motions by a converter formed by DNA-disengaged RuvB subunits stimulates ATP hydrolysis and nucleotide exchange. Immobilization of the converter enables RuvB to convert the ATP-contained energy into a lever motion, pulling 2 nucleotides of DNA out of the RuvA tetramer per ATP hydrolyzed, thus driving DNA branch migration. The RuvB motors rotate together with the DNA substrate, which together with the progressing nucleotide cycle form the mechanistic basis for DNA recombination by continuous HJ branch migration. Branch migration allows RuvC to scan DNA until it finds its consensus sequence, where it cleaves and resolves cruciform DNA. The chain is Holliday junction branch migration complex subunit RuvB from Clostridium perfringens (strain ATCC 13124 / DSM 756 / JCM 1290 / NCIMB 6125 / NCTC 8237 / Type A).